Here is a 798-residue protein sequence, read N- to C-terminus: Elongation factor G, mitochondrial (798 aa).

The N-terminal 24 residues, 1-24 (MRVIRAAAALNSSCAASSRQGARY), are a transit peptide targeting the mitochondrion. Residues 97-383 (SMVRNIGIAA…AVCDYLPNPG (287 aa)) enclose the tr-type G domain. GTP contacts are provided by residues 106 to 113 (AHIDSGKT), 181 to 185 (DTPGH), and 235 to 238 (NKMD).

The protein belongs to the TRAFAC class translation factor GTPase superfamily. Classic translation factor GTPase family. EF-G/EF-2 subfamily.

It localises to the mitochondrion. Its pathway is protein biosynthesis; polypeptide chain elongation. Functionally, mitochondrial GTPase that catalyzes the GTP-dependent ribosomal translocation step during translation elongation. During this step, the ribosome changes from the pre-translocational (PRE) to the post-translocational (POST) state as the newly formed A-site-bound peptidyl-tRNA and P-site-bound deacylated tRNA move to the P and E sites, respectively. Catalyzes the coordinated movement of the two tRNA molecules, the mRNA and conformational changes in the ribosome. The protein is Elongation factor G, mitochondrial of Chaetomium globosum (strain ATCC 6205 / CBS 148.51 / DSM 1962 / NBRC 6347 / NRRL 1970) (Soil fungus).